The primary structure comprises 1113 residues: MLEADLVSKMLRAVLQSHKNGIVLPRLQGEYRSLTGDWIPFKQLGYPTLEAYLRSVPAVVRIEASRSGEIVCYAVACTETARIAQLVARQRTSKRKTGRQINCQMRVKKTMPFFLEGKPKATLRQPGFASDYSISKKPNPTLLREKGSTLGAKADVDMPPYPDAPVQRHVSMSANSSVTVLRSHPEASKLQFMGYSPKPHCLLLFSPKSSLPAPFQTHISRACPKEVNDNLNQTVEKPNVTPPASYTNKMDEVQNRIKEILDKHNNGIWISKLPHFYKEFYKEDLNQGVLQQFEHWPHICTVEKPCGGGQDLLLYPAKREQPLRSDQDPEKERPPPPPAPRQEVPSKGSPAVMPDVKEKVAELLGKYSSGLWASALPKAFEDMYKVKFPEDALKNLASLSDVCTINYISGNTQKAILYAKLPLPTDKILKDEAQAQGDFDIKSMIEQEYLQIEKNMAESADDFVEDITVPPLVIPTEASPSVLVVELSNTNDVVIRYVGKDYSAAQELMEDEMKEYYSRNPRVTPIQTVHVGQLLAVNAEEDAWLRAQIISTDENKIKVCYVDYGFCENIEKSKAYRLNPRFCSLSFQATKCKLAGLEILNDDPNLVKVVESLTCGKIFAVEILDKSDIPLVVLYDTSGEDDININATCLKAICDRSLEVHLQVDAMYTNVKVTNICSDGTLYCQVPCKGLNKLNDLLHKTEDYFHCKHMTSEYFISLPFCGKICLFHCKGKWLRVEITNVHSSRALDVQFLDSGNSTSVKVSELREIPPRFLQEMLAIPPQAIKCCLADLPQSIGMWTPDAVLWLRDSVLNCSDCSIKVTKVDEARGVAYVYLFTPKNFPDPHRSINRQITNADLWKHQKDVFLSAVSAAASSPGNRNASTPAPGSPAESLRKSHPEVLRKSVLDHTSSFSLEELPPPVHLSKSGEHMDVYVPVACHPGHFVIQPWQEIHKLEVLMEEMILYYSVSEERHIAVERDQVYAAKVENKWYRVLLKGILTNGLVSVYELDYGKHELVNIRKVQPLVDVFRKLPFQAVTAQLAGVKCSQWSEEASMVFRNHVEKKPLVALVQTVIEHANPWDRKVVVYLVDTSLPDTDTWIHDFMSQYLVELSKAN.

2 HTH OST-type domains span residues 3–76 and 249–318; these read EADL…YAVA and KMDE…YPAK. Positions 320-334 are enriched in basic and acidic residues; the sequence is EQPLRSDQDPEKERP. Residues 320–352 are disordered; that stretch reads EQPLRSDQDPEKERPPPPPAPRQEVPSKGSPAV. Residues 352-421 form the HTH OST-type 3 domain; that stretch reads VMPDVKEKVA…TQKAILYAKL (70 aa). Tudor domains are found at residues 528–585 and 718–775; these read TVHV…FCSL and LPFC…FLQE. The segment at 873–895 is disordered; sequence SSPGNRNASTPAPGSPAESLRKS. Ser874 carries the post-translational modification Phosphoserine. Residues 875-884 are compositionally biased toward polar residues; sequence PGNRNASTPA. The interval 876 to 1113 is interaction with CDK17; it reads GNRNASTPAP…QYLVELSKAN (238 aa). The interval 908 to 1113 is interaction with CABLES1; sequence TSSFSLEELP…QYLVELSKAN (206 aa).

The protein belongs to the TDRD7 family. Found in a mRNP complex, at least composed of TDRD1, TDRD6, TDRD7 and DDX4. Found in a complex containing CABLES1, CDK16 and CDK17. Interacts with CABLES1, CDK17 and PIWIL1. In terms of tissue distribution, expressed in brain and testis.

It localises to the cytoplasm. Its function is as follows. Component of specific cytoplasmic RNA granules involved in post-transcriptional regulation of specific genes: probably acts by binding to specific mRNAs and regulating their translation. Required for lens transparency during lens development, by regulating translation of genes such as CRYBB3 and HSPB1 in the developing lens. Also required during spermatogenesis. The chain is Tudor domain-containing protein 7 (Tdrd7) from Rattus norvegicus (Rat).